The following is a 185-amino-acid chain: Probable chorismate pyruvate-lyase 2 (185 aa).

The substrate site is built by arginine 80, leucine 118, and glutamate 170.

Belongs to the UbiC family.

The protein resides in the cytoplasm. It catalyses the reaction chorismate = 4-hydroxybenzoate + pyruvate. Its pathway is cofactor biosynthesis; ubiquinone biosynthesis. Removes the pyruvyl group from chorismate, with concomitant aromatization of the ring, to provide 4-hydroxybenzoate (4HB) for the ubiquinone pathway. The sequence is that of Probable chorismate pyruvate-lyase 2 from Pseudomonas entomophila (strain L48).